We begin with the raw amino-acid sequence, 147 residues long: Large ribosomal subunit protein uL13 (147 aa).

It belongs to the universal ribosomal protein uL13 family. As to quaternary structure, part of the 50S ribosomal subunit.

In terms of biological role, this protein is one of the early assembly proteins of the 50S ribosomal subunit, although it is not seen to bind rRNA by itself. It is important during the early stages of 50S assembly. This is Large ribosomal subunit protein uL13 from Kocuria rhizophila (strain ATCC 9341 / DSM 348 / NBRC 103217 / DC2201).